Here is a 455-residue protein sequence, read N- to C-terminus: MNVWTKFFQPPKHIKEIEDQEVVKKKYKYWRIRIFYSMFIGYIFYYFTRKSFTFAMPTLIADLGFDKAQLGIIGSTLYFSYGISKFVSGVMSDQSNPRYFMAIGLMITGLTNIFFGMSSSIVLFALWWGLNGWFQGWGWPPCARLLTHWYAKSERGTWWSVWSTSHNIGGALIPILTGFIIDYSGWRGAMYVPGILCIGMGLVLINRLRDTPQSLGLPPIEKYKRDPHHAHHEGKSASEGTEEIERELSTREILFTYVLTNQWLWFLAAASFFIYIVRMAVNDWSALFLIETKHYAAVKANFCVSLFEIGGLFGMLVAGWLSDKISKGNRGPMNVLFSLGLLFAILGMWFSRSHNQWWVDGTLLFVIGFFLYGPQMMIGLAAAELSHKKAAGTASGFTGWFAYFGATFAGYPLGKVTDVWGWKGFFIALLACASIALLLFLPTWNATEKNTRSKA.

5 helical membrane passes run 34–54, 70–90, 113–133, 161–181, and 185–205; these read IFYSMFIGYIFYYFTRKSFTF, LGIIGSTLYFSYGISKFVSGV, IFFGMSSSIVLFALWWGLNGW, VWSTSHNIGGALIPILTGFII, and GWRGAMYVPGILCIGMGLVLI. The tract at residues 219 to 242 is disordered; sequence PIEKYKRDPHHAHHEGKSASEGTE. A run of 6 helical transmembrane segments spans residues 257 to 277, 302 to 322, 331 to 351, 363 to 383, 394 to 414, and 424 to 444; these read YVLTNQWLWFLAAASFFIYIV, FCVSLFEIGGLFGMLVAGWLS, GPMNVLFSLGLLFAILGMWFS, LLFVIGFFLYGPQMMIGLAAA, ASGFTGWFAYFGATFAGYPLG, and GFFIALLACASIALLLFLPTW.

This sequence belongs to the major facilitator superfamily. Organophosphate:Pi antiporter (OPA) (TC 2.A.1.4) family.

Its subcellular location is the cell membrane. Transport protein for sugar phosphate uptake. This is Probable hexose phosphate transport protein (uhpC) from Chlamydia pneumoniae (Chlamydophila pneumoniae).